Here is a 426-residue protein sequence, read N- to C-terminus: Enolase (426 aa).

Glutamine 163 provides a ligand contact to (2R)-2-phosphoglycerate. The active-site Proton donor is the glutamate 205. Aspartate 242, glutamate 286, and aspartate 313 together coordinate Mg(2+). Residues lysine 338, arginine 367, serine 368, and lysine 389 each contribute to the (2R)-2-phosphoglycerate site. The Proton acceptor role is filled by lysine 338.

Belongs to the enolase family. It depends on Mg(2+) as a cofactor.

Its subcellular location is the cytoplasm. It localises to the secreted. The protein localises to the cell surface. It catalyses the reaction (2R)-2-phosphoglycerate = phosphoenolpyruvate + H2O. The protein operates within carbohydrate degradation; glycolysis; pyruvate from D-glyceraldehyde 3-phosphate: step 4/5. Catalyzes the reversible conversion of 2-phosphoglycerate (2-PG) into phosphoenolpyruvate (PEP). It is essential for the degradation of carbohydrates via glycolysis. This chain is Enolase, found in Helicobacter pylori (strain HPAG1).